Reading from the N-terminus, the 239-residue chain is ATP-dependent dethiobiotin synthetase BioD (239 aa).

15-20 (EIGKTF) contacts ATP. Threonine 19 contributes to the Mg(2+) binding site. The active site involves lysine 40. Residues aspartate 57, 118-121 (EGVG), 178-179 (NH), and 211-213 (AHL) contribute to the ATP site. Mg(2+) is bound by residues aspartate 57 and glutamate 118.

Belongs to the dethiobiotin synthetase family. As to quaternary structure, homodimer. It depends on Mg(2+) as a cofactor.

It localises to the cytoplasm. It carries out the reaction (7R,8S)-7,8-diammoniononanoate + CO2 + ATP = (4R,5S)-dethiobiotin + ADP + phosphate + 3 H(+). Its pathway is cofactor biosynthesis; biotin biosynthesis; biotin from 7,8-diaminononanoate: step 1/2. In terms of biological role, catalyzes a mechanistically unusual reaction, the ATP-dependent insertion of CO2 between the N7 and N8 nitrogen atoms of 7,8-diaminopelargonic acid (DAPA, also called 7,8-diammoniononanoate) to form a ureido ring. This chain is ATP-dependent dethiobiotin synthetase BioD, found in Burkholderia vietnamiensis (strain G4 / LMG 22486) (Burkholderia cepacia (strain R1808)).